Consider the following 348-residue polypeptide: Uroporphyrinogen decarboxylase (348 aa).

Substrate-binding positions include 27 to 31 (RQAGR), F46, D76, Y152, S207, and H320.

The protein belongs to the uroporphyrinogen decarboxylase family. As to quaternary structure, homodimer.

The protein resides in the cytoplasm. The enzyme catalyses uroporphyrinogen III + 4 H(+) = coproporphyrinogen III + 4 CO2. Its pathway is porphyrin-containing compound metabolism; protoporphyrin-IX biosynthesis; coproporphyrinogen-III from 5-aminolevulinate: step 4/4. Catalyzes the decarboxylation of four acetate groups of uroporphyrinogen-III to yield coproporphyrinogen-III. The chain is Uroporphyrinogen decarboxylase from Bacillus cereus (strain G9842).